The following is a 249-amino-acid chain: Small ribosomal subunit protein eS6 (249 aa).

Residues 216-229 show a composition bias toward basic and acidic residues; sequence RMKEAKEKRQEQIA. Residues 216–249 form a disordered region; it reads RMKEAKEKRQEQIAKRRRLSSLRASTSKSESSQK. Phosphoserine is present on residues Ser235, Ser236, Ser240, Ser244, and Ser247. The segment covering 236 to 249 has biased composition (low complexity); sequence SLRASTSKSESSQK.

This sequence belongs to the eukaryotic ribosomal protein eS6 family. Component of the small ribosomal subunit. Part of the small subunit (SSU) processome, composed of more than 70 proteins and the RNA chaperone small nucleolar RNA (snoRNA) U3. In terms of processing, ribosomal protein S6 is the major substrate of protein kinases in eukaryote ribosomes. The phosphorylation is stimulated by growth factors, tumor promoting agents, and mitogens. It is dephosphorylated at growth arrest.

Its subcellular location is the cytoplasm. It localises to the nucleus. The protein resides in the nucleolus. In terms of biological role, component of the 40S small ribosomal subunit. Plays an important role in controlling cell growth and proliferation through the selective translation of particular classes of mRNA. Part of the small subunit (SSU) processome, first precursor of the small eukaryotic ribosomal subunit. During the assembly of the SSU processome in the nucleolus, many ribosome biogenesis factors, an RNA chaperone and ribosomal proteins associate with the nascent pre-rRNA and work in concert to generate RNA folding, modifications, rearrangements and cleavage as well as targeted degradation of pre-ribosomal RNA by the RNA exosome. The polypeptide is Small ribosomal subunit protein eS6 (RPS6) (Gallus gallus (Chicken)).